Here is a 77-residue protein sequence, read N- to C-terminus: Dermatoxin-S1 (77 aa).

Positions 1–22 are cleaved as a signal peptide; the sequence is MAFLKKSLFLILFLGLVPLSFC. Residues 23–44 constitute a propeptide that is removed on maturation; it reads ENDKREGENEEEQDDDQSEEKR. Q76 is modified (glutamine amide).

Expressed by the skin glands.

The protein localises to the secreted. It is found in the target cell membrane. Antimicrobial peptide with potent activity against Gram-positive bacteria B.megaterium, C.glutamicum and S.aureus and mollicutes A.laidlawii and S.melliferum. Less active against Gram-negative bacteria B.cepacia, P.aeruginosa, S.typhimurium and S.meliloti. Probably acts by disturbing membrane functions with its amphipathic structure. This chain is Dermatoxin-S1, found in Phyllomedusa sauvagei (Sauvage's leaf frog).